The primary structure comprises 429 residues: MGLSTAYSPVGSHLAPAPLGHRRSAQLHRPRRALLATVRCSVDAAKQVQDGVATAEAPATRKDCFGVFCTTYDLKAEDKTKSWKKLVNIAVSGAAGMISNHLLFKLASGEVFGQDQPIALKLLGSERSFQALEGVAMELEDSLYPLLREVSIGIDPYEVFEDVDWALLIGAKPRGPGMERAALLDINGQIFADQGKALNAVASKNVKVLVVGNPCNTNALICLKNAPDIPAKNFHALTRLDENRAKCQLALKAGVFYDKVSNVTIWGNHSTTQVPDFLNAKIDGRPVKEVIKDTKWLEEEFTITVQKRGGALIQKWGRSSAASTAVSIADAIKSLVTPTPEGDWFSTGVYTTGNPYGIAEDIVFSMPCRSKGDGDYELATDVSMDDFLWERIKKSEAELLAEKKCVAHLTGEGNAYCDVPEDTMLPGEV.

Residues M1–C40 constitute a chloroplast transit peptide. A disulfide bridge connects residues C64 and C69. G93 to S99 contacts NADP(+). Residues R174 and R180 each contribute to the substrate site. NADP(+) contacts are provided by residues N187, Q194, and V211–N213. Residues N213 and R244 each contribute to the substrate site. The active-site Proton acceptor is the H269. C405 and C417 are oxidised to a cystine.

This sequence belongs to the LDH/MDH superfamily. MDH type 2 family. Homodimer.

It is found in the plastid. Its subcellular location is the chloroplast. The catalysed reaction is (S)-malate + NADP(+) = oxaloacetate + NADPH + H(+). Its activity is regulated as follows. Chloroplast NADP-MDH is activated upon illumination. In order to be enzymatically active, disulfide bridges on the protein must be reduced by thioredoxin which receives electrons from ferredoxin and the electron transport system of photosynthesis. Functionally, the chloroplastic, NADP-dependent form is essential for the photosynthesis C4 cycle, which allows plants to circumvent the problem of photorespiration. In C4 plants, NADP-MDH activity acts to convert oxaloacetate to malate in chloroplasts of mesophyll cells for transport to the bundle sheath cells. The polypeptide is Malate dehydrogenase [NADP] 1, chloroplastic (Sorghum bicolor (Sorghum)).